Consider the following 145-residue polypeptide: Large ribosomal subunit protein bL19 (145 aa).

Belongs to the bacterial ribosomal protein bL19 family.

Its function is as follows. This protein is located at the 30S-50S ribosomal subunit interface and may play a role in the structure and function of the aminoacyl-tRNA binding site. The protein is Large ribosomal subunit protein bL19 of Brachyspira hyodysenteriae (strain ATCC 49526 / WA1).